The following is a 414-amino-acid chain: Gamma-glutamyl phosphate reductase (414 aa).

Belongs to the gamma-glutamyl phosphate reductase family.

The protein localises to the cytoplasm. It catalyses the reaction L-glutamate 5-semialdehyde + phosphate + NADP(+) = L-glutamyl 5-phosphate + NADPH + H(+). It participates in amino-acid biosynthesis; L-proline biosynthesis; L-glutamate 5-semialdehyde from L-glutamate: step 2/2. In terms of biological role, catalyzes the NADPH-dependent reduction of L-glutamate 5-phosphate into L-glutamate 5-semialdehyde and phosphate. The product spontaneously undergoes cyclization to form 1-pyrroline-5-carboxylate. This Alkaliphilus metalliredigens (strain QYMF) protein is Gamma-glutamyl phosphate reductase.